Here is a 293-residue protein sequence, read N- to C-terminus: Phosphatidylserine decarboxylase proenzyme (293 aa).

Residues Asp-88, His-144, and Ser-247 each act as charge relay system; for autoendoproteolytic cleavage activity in the active site. Ser-247 functions as the Schiff-base intermediate with substrate; via pyruvic acid; for decarboxylase activity in the catalytic mechanism. Ser-247 bears the Pyruvic acid (Ser); by autocatalysis mark.

This sequence belongs to the phosphatidylserine decarboxylase family. PSD-B subfamily. Prokaryotic type I sub-subfamily. In terms of assembly, heterodimer of a large membrane-associated beta subunit and a small pyruvoyl-containing alpha subunit. Pyruvate serves as cofactor. Post-translationally, is synthesized initially as an inactive proenzyme. Formation of the active enzyme involves a self-maturation process in which the active site pyruvoyl group is generated from an internal serine residue via an autocatalytic post-translational modification. Two non-identical subunits are generated from the proenzyme in this reaction, and the pyruvate is formed at the N-terminus of the alpha chain, which is derived from the carboxyl end of the proenzyme. The autoendoproteolytic cleavage occurs by a canonical serine protease mechanism, in which the side chain hydroxyl group of the serine supplies its oxygen atom to form the C-terminus of the beta chain, while the remainder of the serine residue undergoes an oxidative deamination to produce ammonia and the pyruvoyl prosthetic group on the alpha chain. During this reaction, the Ser that is part of the protease active site of the proenzyme becomes the pyruvoyl prosthetic group, which constitutes an essential element of the active site of the mature decarboxylase.

The protein resides in the cell membrane. The catalysed reaction is a 1,2-diacyl-sn-glycero-3-phospho-L-serine + H(+) = a 1,2-diacyl-sn-glycero-3-phosphoethanolamine + CO2. It participates in phospholipid metabolism; phosphatidylethanolamine biosynthesis; phosphatidylethanolamine from CDP-diacylglycerol: step 2/2. Functionally, catalyzes the formation of phosphatidylethanolamine (PtdEtn) from phosphatidylserine (PtdSer). The chain is Phosphatidylserine decarboxylase proenzyme from Xylella fastidiosa (strain 9a5c).